The sequence spans 278 residues: Phosphonates import ATP-binding protein PhnC 2 (278 aa).

Residues 5-253 enclose the ABC transporter domain; it reads IRVDSLNKTF…FLNELYGAEG (249 aa). 37–44 is a binding site for ATP; it reads GASGSGKS.

This sequence belongs to the ABC transporter superfamily. Phosphonates importer (TC 3.A.1.9.1) family. The complex is composed of two ATP-binding proteins (PhnC), two transmembrane proteins (PhnE) and a solute-binding protein (PhnD).

The protein resides in the cell inner membrane. It catalyses the reaction phosphonate(out) + ATP + H2O = phosphonate(in) + ADP + phosphate + H(+). Functionally, part of the ABC transporter complex PhnCDE involved in phosphonates import. Responsible for energy coupling to the transport system. This chain is Phosphonates import ATP-binding protein PhnC 2, found in Pseudomonas aeruginosa (strain ATCC 15692 / DSM 22644 / CIP 104116 / JCM 14847 / LMG 12228 / 1C / PRS 101 / PAO1).